The following is a 436-amino-acid chain: Methylenetetrahydrofolate--tRNA-(uracil-5-)-methyltransferase TrmFO (436 aa).

FAD is bound at residue 9 to 14 (GAGLAG).

This sequence belongs to the MnmG family. TrmFO subfamily. Requires FAD as cofactor.

It localises to the cytoplasm. The catalysed reaction is uridine(54) in tRNA + (6R)-5,10-methylene-5,6,7,8-tetrahydrofolate + NADH + H(+) = 5-methyluridine(54) in tRNA + (6S)-5,6,7,8-tetrahydrofolate + NAD(+). The enzyme catalyses uridine(54) in tRNA + (6R)-5,10-methylene-5,6,7,8-tetrahydrofolate + NADPH + H(+) = 5-methyluridine(54) in tRNA + (6S)-5,6,7,8-tetrahydrofolate + NADP(+). Functionally, catalyzes the folate-dependent formation of 5-methyl-uridine at position 54 (M-5-U54) in all tRNAs. This is Methylenetetrahydrofolate--tRNA-(uracil-5-)-methyltransferase TrmFO from Acetivibrio thermocellus (strain ATCC 27405 / DSM 1237 / JCM 9322 / NBRC 103400 / NCIMB 10682 / NRRL B-4536 / VPI 7372) (Clostridium thermocellum).